We begin with the raw amino-acid sequence, 612 residues long: Elongation factor 4 (612 aa).

Positions 11 to 193 constitute a tr-type G domain; sequence KHIRNFAIVA…KVVKDIPAPS (183 aa). Residues 23–28 and 140–143 each bind GTP; these read DHGKST and NKID.

The protein belongs to the TRAFAC class translation factor GTPase superfamily. Classic translation factor GTPase family. LepA subfamily.

The protein resides in the cell membrane. The enzyme catalyses GTP + H2O = GDP + phosphate + H(+). Required for accurate and efficient protein synthesis under certain stress conditions. May act as a fidelity factor of the translation reaction, by catalyzing a one-codon backward translocation of tRNAs on improperly translocated ribosomes. Back-translocation proceeds from a post-translocation (POST) complex to a pre-translocation (PRE) complex, thus giving elongation factor G a second chance to translocate the tRNAs correctly. Binds to ribosomes in a GTP-dependent manner. The chain is Elongation factor 4 from Lactobacillus helveticus (strain DPC 4571).